The sequence spans 189 residues: GMP synthase [glutamine-hydrolyzing] subunit A (189 aa).

Positions 1–189 (MIVILNNGGQ…CKKCGFGFEE (189 aa)) constitute a Glutamine amidotransferase type-1 domain. The Nucleophile role is filled by cysteine 76. Active-site residues include histidine 163 and glutamate 165.

In terms of assembly, heterodimer composed of a glutamine amidotransferase subunit (A) and a GMP-binding subunit (B).

It carries out the reaction XMP + L-glutamine + ATP + H2O = GMP + L-glutamate + AMP + diphosphate + 2 H(+). The protein operates within purine metabolism; GMP biosynthesis; GMP from XMP (L-Gln route): step 1/1. Functionally, catalyzes the synthesis of GMP from XMP. This is GMP synthase [glutamine-hydrolyzing] subunit A from Methanococcus maripaludis (strain DSM 14266 / JCM 13030 / NBRC 101832 / S2 / LL).